Here is an 87-residue protein sequence, read N- to C-terminus: Small ribosomal subunit protein uS15c (87 aa).

Belongs to the universal ribosomal protein uS15 family. In terms of assembly, part of the 30S ribosomal subunit.

It is found in the plastid. It localises to the chloroplast. The polypeptide is Small ribosomal subunit protein uS15c (rps15) (Illicium oligandrum (Star anise)).